We begin with the raw amino-acid sequence, 98 residues long: Molybdopterin synthase sulfur carrier subunit (98 aa).

Residue glycine 98 is modified to 1-thioglycine; alternate. Glycine 98 is modified (glycyl adenylate; alternate).

This sequence belongs to the MoaD family. MOCS2A subfamily. As to quaternary structure, heterotetramer; composed of 2 small (MOCS2A) and 2 large (MOCS2B) subunits. Post-translationally, C-terminal thiocarboxylation occurs in 2 steps, it is first acyl-adenylated (-COAMP) via the hesA/moeB/thiF part of MOCS3, then thiocarboxylated (-COSH) via the rhodanese domain of MOCS3.

The protein resides in the cytoplasm. The protein operates within cofactor biosynthesis; molybdopterin biosynthesis. Functionally, acts as a sulfur carrier required for molybdopterin biosynthesis. Component of the molybdopterin synthase complex that catalyzes the conversion of precursor Z into molybdopterin by mediating the incorporation of 2 sulfur atoms into precursor Z to generate a dithiolene group. In the complex, serves as sulfur donor by being thiocarboxylated (-COSH) at its C-terminus by MOCS3. After interaction with MOCS2B, the sulfur is then transferred to precursor Z to form molybdopterin. The polypeptide is Molybdopterin synthase sulfur carrier subunit (Aedes aegypti (Yellowfever mosquito)).